A 488-amino-acid chain; its full sequence is Proline--tRNA ligase (488 aa).

The protein belongs to the class-II aminoacyl-tRNA synthetase family. ProS type 3 subfamily. As to quaternary structure, homodimer.

It localises to the cytoplasm. It carries out the reaction tRNA(Pro) + L-proline + ATP = L-prolyl-tRNA(Pro) + AMP + diphosphate. Its function is as follows. Catalyzes the attachment of proline to tRNA(Pro) in a two-step reaction: proline is first activated by ATP to form Pro-AMP and then transferred to the acceptor end of tRNA(Pro). This chain is Proline--tRNA ligase, found in Pyrobaculum arsenaticum (strain DSM 13514 / JCM 11321 / PZ6).